The following is a 183-amino-acid chain: Peptide deformylase (183 aa).

2 residues coordinate Fe cation: Cys-110 and His-153. Glu-154 is an active-site residue. A Fe cation-binding site is contributed by His-157.

Belongs to the polypeptide deformylase family. Fe(2+) serves as cofactor.

It carries out the reaction N-terminal N-formyl-L-methionyl-[peptide] + H2O = N-terminal L-methionyl-[peptide] + formate. Its function is as follows. Removes the formyl group from the N-terminal Met of newly synthesized proteins. Requires at least a dipeptide for an efficient rate of reaction. N-terminal L-methionine is a prerequisite for activity but the enzyme has broad specificity at other positions. This Shouchella clausii (strain KSM-K16) (Alkalihalobacillus clausii) protein is Peptide deformylase.